Reading from the N-terminus, the 387-residue chain is Galactokinase (387 aa).

33–36 (EHTD) contacts substrate. ATP contacts are provided by residues serine 67 and 124–130 (GSGLSSS). Mg(2+) is bound by residues serine 130 and glutamate 162. Aspartate 174 (proton acceptor) is an active-site residue. Substrate is bound at residue tyrosine 224.

It belongs to the GHMP kinase family. GalK subfamily.

The protein resides in the cytoplasm. The catalysed reaction is alpha-D-galactose + ATP = alpha-D-galactose 1-phosphate + ADP + H(+). The protein operates within carbohydrate metabolism; galactose metabolism. Its function is as follows. Catalyzes the transfer of the gamma-phosphate of ATP to D-galactose to form alpha-D-galactose-1-phosphate (Gal-1-P). This Ligilactobacillus salivarius (strain UCC118) (Lactobacillus salivarius) protein is Galactokinase.